We begin with the raw amino-acid sequence, 325 residues long: Polyprenyl transferase mpaA (325 aa).

The next 3 membrane-spanning stretches (helical) occupy residues M27–L47, V56–A76, and V108–I128. An N-linked (GlcNAc...) asparagine glycan is attached at N131. 6 helical membrane passes run I134 to L151, V159 to W179, I192 to T212, L240 to I260, S262 to V282, and I295 to G315.

This sequence belongs to the UbiA prenyltransferase family. The cofactor is Mg(2+).

It is found in the golgi apparatus membrane. It carries out the reaction 5,7-dihydroxy-4-methylphthalide + (2E,6E)-farnesyl diphosphate = 4-farnesyl-3,5-dihydroxy-6-methylphthalide + diphosphate. It participates in secondary metabolite biosynthesis; terpenoid biosynthesis. Polyprenyl transferase; part of the gene cluster that mediates the biosynthesis of mycophenolic acid (MPA), the first isolated antibiotic natural product in the world obtained from a culture of Penicillium brevicompactum in 1893. MpaA is a Golgi apparatus-associated enzyme that catalyzes the prenylation of 5,7-dihydroxy-4,6-dimethylphthalide (DHMP) to yield farnesyl-DHMP (FDHMP). The first step of the pathway is the synthesis of 5-methylorsellinic acid (5MOA) by the cytosolic polyketide synthase mpaC. 5MOA is then converted to the phthalide compound 5,7-dihydroxy-4,6-dimethylphthalide (DHMP) by the endoplasmic reticulum-bound cytochrome P450 monooxygenase mpaDE. MpaDE first catalyzes hydroxylation of 5-MOA to 4,6-dihydroxy-2-(hydroxymethyl)-3-methylbenzoic acid (DHMB). MpaDE then acts as a lactone synthase that catalyzes the ring closure to convert DHMB into DHMP. The next step is the prenylation of DHMP by the Golgi apparatus-associated prenyltransferase mpaA to yield farnesyl-DHMP (FDHMP). The ER-bound oxygenase mpaB then mediates the oxidative cleavage the C19-C20 double bond in FDHMP to yield FDHMP-3C via a mycophenolic aldehyde intermediate. The O-methyltransferase mpaG catalyzes the methylation of FDHMP-3C to yield MFDHMP-3C. After the cytosolic methylation of FDHMP-3C, MFDHMP-3C enters into peroxisomes probably via free diffusion due to its low molecular weight. Upon a peroxisomal CoA ligation reaction, catalyzed by a beta-oxidation component enzyme acyl-CoA ligase ACL891, MFDHMP-3C-CoA would then be restricted to peroxisomes for the following beta-oxidation pathway steps. The peroxisomal beta-oxidation machinery than converts MFDHMP-3C-CoA into MPA_CoA, via a beta-oxidation chain-shortening process. Finally mpaH acts as a peroxisomal acyl-CoA hydrolase with high substrate specificity toward MPA-CoA to release the final product MPA. In Penicillium roqueforti (strain FM164), this protein is Polyprenyl transferase mpaA.